The following is a 208-amino-acid chain: Ubiquitin-conjugating enzyme E2 S (208 aa).

Residues 14-160 (QTIRQVMKEL…ARMMTEIHAQ (147 aa)) enclose the UBC core domain. The Glycyl thioester intermediate role is filled by Cys98. Residues 161–196 (PAKCGAGASDAKDDDGPSTKKHAGVDKKLQDKKKEK) are disordered. The span at 170–196 (DAKDDDGPSTKKHAGVDKKLQDKKKEK) shows a compositional bias: basic and acidic residues.

This sequence belongs to the ubiquitin-conjugating enzyme family.

It catalyses the reaction S-ubiquitinyl-[E1 ubiquitin-activating enzyme]-L-cysteine + [E2 ubiquitin-conjugating enzyme]-L-cysteine = [E1 ubiquitin-activating enzyme]-L-cysteine + S-ubiquitinyl-[E2 ubiquitin-conjugating enzyme]-L-cysteine.. Its pathway is protein modification; protein ubiquitination. Functionally, catalyzes the covalent attachment of ubiquitin to other proteins. Acts as an essential factor of the anaphase promoting complex/cyclosome (APC/C), a cell cycle-regulated ubiquitin ligase that controls progression through mitosis. Acts by specifically elongating polyubiquitin chains initiated by the E2 enzyme vih/UbcH10 on APC/C substrates, enhancing the degradation of APC/C substrates by the proteasome and promoting mitotic exit. The chain is Ubiquitin-conjugating enzyme E2 S from Drosophila grimshawi (Hawaiian fruit fly).